Consider the following 389-residue polypeptide: Sinapine esterase (389 aa).

The signal sequence occupies residues M1 to S25. S41 acts as the Nucleophile in catalysis. N-linked (GlcNAc...) asparagine glycans are attached at residues N104, N137, and N320. Catalysis depends on residues D345 and H348. N-linked (GlcNAc...) asparagine glycans are attached at residues N372 and N383.

The protein belongs to the 'GDSL' lipolytic enzyme family. As to expression, expressed in most tissues or organs of the mature seedlings. Not expressed in roots of mature seedlings.

Its subcellular location is the secreted. The enzyme catalyses O-sinapoylcholine + H2O = (E)-sinapate + choline + H(+). With respect to regulation, inhibited by PMSF. Functionally, sinapine esterase that catalyzes that hydrolysis of sinapine, releasing choline and sinapate. Sinapine (O-sinapoylcholine) is the predominant phenolic compound in a complex group of sinapate esters in seeds of oilseed rape (B.napus). Sinapine has antinutritive activity and prevents the use of seed protein for food and feed. Shows broad substrate specificity towards various other choline esters, including phosphatidylcholine. The chain is Sinapine esterase from Brassica napus (Rape).